A 122-amino-acid chain; its full sequence is Large ribosomal subunit protein uL14 (122 aa).

Belongs to the universal ribosomal protein uL14 family. Part of the 50S ribosomal subunit. Forms a cluster with proteins L3 and L19. In the 70S ribosome, L14 and L19 interact and together make contacts with the 16S rRNA in bridges B5 and B8.

In terms of biological role, binds to 23S rRNA. Forms part of two intersubunit bridges in the 70S ribosome. The polypeptide is Large ribosomal subunit protein uL14 (Lacticaseibacillus casei (strain BL23) (Lactobacillus casei)).